A 62-amino-acid chain; its full sequence is Sperm protamine P1 (62 aa).

The disordered stretch occupies residues 1 to 62; the sequence is MARYRHSRSR…RYSRRRRRRY (62 aa).

It belongs to the protamine P1 family. Testis.

It localises to the nucleus. Its subcellular location is the chromosome. Protamines substitute for histones in the chromatin of sperm during the haploid phase of spermatogenesis. They compact sperm DNA into a highly condensed, stable and inactive complex. The polypeptide is Sperm protamine P1 (PRM1) (Dorcopsulus vanheurni (Lesser forest wallaby)).